Reading from the N-terminus, the 546-residue chain is Chaperonin GroEL (546 aa).

Residues 30-33 (TLGP), lysine 51, 87-91 (DGTTT), glycine 415, 479-481 (NAA), and aspartate 495 contribute to the ATP site. The interval 526 to 546 (KEDAPMPGGMPGGMGGMGMDM) is disordered. The span at 534 to 546 (GMPGGMGGMGMDM) shows a compositional bias: gly residues.

Belongs to the chaperonin (HSP60) family. As to quaternary structure, forms a cylinder of 14 subunits composed of two heptameric rings stacked back-to-back. Interacts with the co-chaperonin GroES.

It localises to the cytoplasm. It catalyses the reaction ATP + H2O + a folded polypeptide = ADP + phosphate + an unfolded polypeptide.. Functionally, together with its co-chaperonin GroES, plays an essential role in assisting protein folding. The GroEL-GroES system forms a nano-cage that allows encapsulation of the non-native substrate proteins and provides a physical environment optimized to promote and accelerate protein folding. The chain is Chaperonin GroEL from Burkholderia cepacia (Pseudomonas cepacia).